Consider the following 404-residue polypeptide: 4-hydroxy-3-methylbut-2-en-1-yl diphosphate synthase (flavodoxin) (404 aa).

Residues Cys-310, Cys-313, Cys-345, and Glu-352 each contribute to the [4Fe-4S] cluster site.

This sequence belongs to the IspG family. Requires [4Fe-4S] cluster as cofactor.

It carries out the reaction (2E)-4-hydroxy-3-methylbut-2-enyl diphosphate + oxidized [flavodoxin] + H2O + 2 H(+) = 2-C-methyl-D-erythritol 2,4-cyclic diphosphate + reduced [flavodoxin]. It functions in the pathway isoprenoid biosynthesis; isopentenyl diphosphate biosynthesis via DXP pathway; isopentenyl diphosphate from 1-deoxy-D-xylulose 5-phosphate: step 5/6. Functionally, converts 2C-methyl-D-erythritol 2,4-cyclodiphosphate (ME-2,4cPP) into 1-hydroxy-2-methyl-2-(E)-butenyl 4-diphosphate. The chain is 4-hydroxy-3-methylbut-2-en-1-yl diphosphate synthase (flavodoxin) from Treponema pallidum (strain Nichols).